A 195-amino-acid chain; its full sequence is PRS fimbrial minor pilin protein (195 aa).

An N-terminal signal peptide occupies residues 1-22; sequence MRLRFSVPLFFFGCVFVHGVFA. The cysteines at positions 58 and 97 are disulfide-linked.

It belongs to the fimbrial protein family.

Its subcellular location is the secreted. It localises to the fimbrium. Functionally, fimbriae (also called pili), polar filaments radiating from the surface of the bacterium to a length of 0.5-1.5 micrometers and numbering 100-300 per cell, enable bacteria to colonize the epithelium of specific host organs. Seems to anchor the pilus to the bacterial cell. In addition the stoichiometric relationship between PrsH and PrsA determines the pilus length. This Escherichia coli protein is PRS fimbrial minor pilin protein (prsH).